Reading from the N-terminus, the 202-residue chain is MLLGCCHLGYKMSRIEPTRFVLFRHSSTFRVHMSVLQVLTFPDDRLRTVAKPVEKVTPEIQKIVDDMIETMYDEEGIGLAATQVDIHQRIVVIDISESRNEPMVLINPEILEKRGEDGIEEGCLSVPGARALVPRAAEVTVKALDRDGHEFTLEADDLLAICIQHELDHLQGKLFVDYLSPLKRKRIQDKLAKIKRFNEKQR.

2 residues coordinate Fe cation: Cys-123 and His-165. Residue Glu-166 is part of the active site. Position 169 (His-169) interacts with Fe cation.

It belongs to the polypeptide deformylase family. Fe(2+) is required as a cofactor.

It catalyses the reaction N-terminal N-formyl-L-methionyl-[peptide] + H2O = N-terminal L-methionyl-[peptide] + formate. Removes the formyl group from the N-terminal Met of newly synthesized proteins. Requires at least a dipeptide for an efficient rate of reaction. N-terminal L-methionine is a prerequisite for activity but the enzyme has broad specificity at other positions. The protein is Peptide deformylase 2 of Vibrio vulnificus (strain YJ016).